We begin with the raw amino-acid sequence, 346 residues long: MHIMEFPREVILGKNVISETVNVAKRLSFSSPVLVVYGPKTKEIAGKDVERVLKEEFDVHSVIVKEATINEVEKVEGIIRDNKVKWAIAVGGGTIIDVTKLASYRAGIPFVSFPTTASHDGIASANASIKGLGTKTSIKARPPVAVIADIRIIKSAPRRYLAAGVGDVISNITAVRDWKLAHKIKGEYFSEYAAALSLMSAKMVMRDAEIIRIGDDEGVRKVVKALISSGVAMSIAGSSRPASGAEHLFSHALDLLLEKPALHGEQTGIGTIIMAYLHGINWRKIKETLQKVGAPTTAYELGVDPEIIIEALTIAHTIRPERYTILGRDGLTREAAERAAKITGVI.

NAD(+) is bound by residues 93–97 (GTIID) and 115–118 (TTAS). D120 is a binding site for substrate. S124 contributes to the NAD(+) binding site. D167 serves as a coordination point for substrate. Zn(2+)-binding residues include D167 and H247. H251 lines the substrate pocket. Residue H263 participates in Zn(2+) binding.

The protein belongs to the glycerol-1-phosphate dehydrogenase family. It depends on Zn(2+) as a cofactor.

Its subcellular location is the cytoplasm. The catalysed reaction is sn-glycerol 1-phosphate + NAD(+) = dihydroxyacetone phosphate + NADH + H(+). It catalyses the reaction sn-glycerol 1-phosphate + NADP(+) = dihydroxyacetone phosphate + NADPH + H(+). Its pathway is membrane lipid metabolism; glycerophospholipid metabolism. In terms of biological role, catalyzes the NAD(P)H-dependent reduction of dihydroxyacetonephosphate (DHAP or glycerone phosphate) to glycerol 1-phosphate (G1P). The G1P thus generated is used as the glycerophosphate backbone of phospholipids in the cellular membranes of Archaea. The sequence is that of Glycerol-1-phosphate dehydrogenase [NAD(P)+] from Pyrococcus furiosus (strain ATCC 43587 / DSM 3638 / JCM 8422 / Vc1).